We begin with the raw amino-acid sequence, 33 residues long: Brevinin-2DYd (33 aa).

Cys-27 and Cys-33 are joined by a disulfide.

As to expression, expressed by the skin glands.

The protein resides in the secreted. In terms of biological role, antimicrobial peptide. A mixture of Brevinin-2DYc/2DYd is active against the Gram-positive bacterium S.aureus (MIC=15 uM) and the Gram-negative bacterium E.coli (MIC=15 uM). This is Brevinin-2DYd from Rana dybowskii (Dybovsky's frog).